The chain runs to 637 residues: Sodium-dependent proline transporter (637 aa).

The Cytoplasmic segment spans residues 1-45 (MKKLQEAHLRKPITPDLLMTPSDQGDVDLDVDFAADRGNWTGKLD). Thr20 is modified (phosphothreonine). At Ser22 the chain carries Phosphoserine. 3 helical membrane-spanning segments follow: residues 46–66 (FLLS…FPYR), 74–93 (AFLV…LFFL), and 117–137 (GAGA…NMII). Over 138–214 (AYVLFYLFAS…QGIGRPGEIR (77 aa)) the chain is Extracellular. Asn182 carries an N-linked (GlcNAc...) asparagine glycan. Transmembrane regions (helical) follow at residues 215–233 (WNLC…LCIL), 242–259 (VVYF…MLLV), 295–312 (IFYS…FASY), 324–345 (FIVT…FSVL), 378–397 (LPLS…TLGL), 425–443 (VFSG…ILTT), 459–479 (SFGL…VYGI), 500–519 (ACWL…YSIV), and 538–556 (LGIL…GMLV). Residues 557-637 (AVLREEGSLW…IAEEEEESMM (81 aa)) lie on the Cytoplasmic side of the membrane. 2 positions are modified to phosphoserine: Ser573 and Ser582. Residue Thr588 is modified to Phosphothreonine. Phosphotyrosine is present on Tyr591. Ser598 and Ser600 each carry phosphoserine.

This sequence belongs to the sodium:neurotransmitter symporter (SNF) (TC 2.A.22) family. SLC6A7 subfamily.

The protein resides in the synaptic cell membrane. The catalysed reaction is L-proline(out) + chloride(out) + 2 Na(+)(out) = L-proline(in) + chloride(in) + 2 Na(+)(in). It carries out the reaction L-pipecolate(out) + chloride(out) + 2 Na(+)(out) = L-pipecolate(in) + chloride(in) + 2 Na(+)(in). Its function is as follows. Brain specific sodium (and chloride)-dependent proline transporter. Terminates the action of proline by its high affinity sodium-dependent reuptake into presynaptic terminals. The chain is Sodium-dependent proline transporter from Mus musculus (Mouse).